A 226-amino-acid chain; its full sequence is PKHD-type hydroxylase PFL_0865 (226 aa).

Residues 78–178 (KVFPPLINCY…RYASFFWTQS (101 aa)) form the Fe2OG dioxygenase domain. His-96, Asp-98, and His-159 together coordinate Fe cation. Arg-169 contributes to the 2-oxoglutarate binding site.

Requires Fe(2+) as cofactor. The cofactor is L-ascorbate.

The sequence is that of PKHD-type hydroxylase PFL_0865 from Pseudomonas fluorescens (strain ATCC BAA-477 / NRRL B-23932 / Pf-5).